We begin with the raw amino-acid sequence, 224 residues long: Cerebellin-2 (224 aa).

An N-terminal signal peptide occupies residues 1-51 (MPAPGQGPRGPLLSMPGRRGALREPADFGSSLGAVLALLLLLLPACCPVRA). N53 and N110 each carry an N-linked (GlcNAc...) asparagine glycan. Positions 88–224 (SGSAKVAFSA…TFSGFLVFPL (137 aa)) constitute a C1q domain.

In terms of assembly, homohexamer; disulfide-linked homotrimers. The trimers are assembled via the globular C1q domains. The trimers associate via N-terminal cysteine residues to form disulfide-linked hexamers. May form homooligomers or heterooligomers with CBLN1 and CBLN3 prior to secretion. Once secreted, does not interact with other CBLN family members. Interacts with GRID2, and more weakly with GRID1. Interacts with NRXN1 and NRXN2 long and short isoforms produced by alternative promoter usage. Weakly interacts with NRXN3 short isoform and not at all with NRXN3 long isoform. In terms of tissue distribution, expressed in various brain regions with higher levels in the olfactory bulb, cerebral cortex, certain thalamic and hypothalamic nuclei, superior and inferior colliculi and some brainstem nuclei. Highly expressed in the dorsal medial habenula.

It localises to the secreted. Its function is as follows. Acts as a synaptic organizer in specific subsets of neurons in the brain. Essential for long-term maintenance but not establishment of excitatory synapses. Functions as part of a trans-synaptic complex by binding to postsynaptic GRID1 and presynaptic neurexins. This interaction helps regulate the activity of NMDA and AMPA receptors at hippocampal synapses without affecting synapse formation. NRXN1B-CBLN2-GRID1 complex transduce presynaptic signals into postsynaptic NMDAR response. NRXN3B-CBLN2-GRID1 complex transduce presynaptic signals into postsynaptic AMPAR response. This Mus musculus (Mouse) protein is Cerebellin-2 (Cbln2).